Here is a 565-residue protein sequence, read N- to C-terminus: NAD-dependent malic enzyme (565 aa).

Tyr-104 functions as the Proton donor in the catalytic mechanism. Arg-157 contacts NAD(+). Lys-175 acts as the Proton acceptor in catalysis. Glu-246, Asp-247, and Asp-270 together coordinate a divalent metal cation. The NAD(+) site is built by Asp-270 and Asn-418.

This sequence belongs to the malic enzymes family. In terms of assembly, homotetramer. The cofactor is Mg(2+). Mn(2+) is required as a cofactor.

The enzyme catalyses (S)-malate + NAD(+) = pyruvate + CO2 + NADH. It catalyses the reaction oxaloacetate + H(+) = pyruvate + CO2. The polypeptide is NAD-dependent malic enzyme (Klebsiella pneumoniae (strain 342)).